The chain runs to 1039 residues: Potassium-transporting ATPase alpha chain 2 (1039 aa).

Residues 1 to 102 (MHQKTPEIYS…NSLTPPKQTP (102 aa)) lie on the Cytoplasmic side of the membrane. A helical membrane pass occupies residues 103–123 (EIVKFLKQMVGGFSILLWVGA). The Lumenal segment spans residues 124–146 (FLCWIAYGIQYSSDKSASLNNVY). Residues 147-167 (LGCVLGLVVILTGIFAYYQEA) form a helical membrane-spanning segment. The Cytoplasmic portion of the chain corresponds to 168 to 303 (KSTNIMSSFN…NEKTPIAIEI (136 aa)). The chain crosses the membrane as a helical span at residues 304–323 (EHFVHIVAGVAVSIGILFFI). The Lumenal portion of the chain corresponds to 324 to 335 (IAVSLKYQVLDS). Residues 336–353 (IIFLIGIIVANVPEGLLA) traverse the membrane as a helical segment. Over 354–787 (TVTVTLSLTA…EEGRLIFDNL (434 aa)) the chain is Cytoplasmic. The active-site 4-aspartylphosphate intermediate is Asp-391. 2 residues coordinate Mg(2+): Asp-732 and Asp-736. The chain crosses the membrane as a helical span at residues 788–807 (KKTIAYSLTKNIAELCPFLI). The Lumenal portion of the chain corresponds to 808–817 (YIIVGLPLPI). The chain crosses the membrane as a helical span at residues 818–838 (GTITILFIDLGTDIIPSIALA). At 839 to 858 (YEKAESDIMNRKPRHKNKDR) the chain is on the cytoplasmic side. Residues 859-881 (LVNQPLAVYSYLHIGLMQALGAF) form a helical membrane-spanning segment. At 882-933 (LVYFTVYAQEGFLPRTLINLRVEWEKDYVNDLKDSYGQEWTRYQREYLEWTG) the chain is on the lumenal side. The helical transmembrane segment at 934–953 (YTAFFVGILVQQIADLIIRK) threads the bilayer. Topologically, residues 954–967 (TRRNSIFQQGLFRN) are cytoplasmic. Residue Ser-958 is modified to Phosphoserine; by PKA. A helical transmembrane segment spans residues 968–986 (KVIWVGITSQIIIGLILSY). Topologically, residues 987–1001 (GLGSVTALSFTMLRA) are lumenal. Residues 1002 to 1022 (QYWFVAVPHAILIWVYDEVRK) form a helical membrane-spanning segment. Topologically, residues 1023 to 1039 (LFIRLYPGSWWDKNMYY) are cytoplasmic.

The protein belongs to the cation transport ATPase (P-type) (TC 3.A.3) family. Type IIC subfamily. As to quaternary structure, the ATPase pump is composed of a catalytic alpha subunit and an auxiliary non-catalytic beta subunit. The alpha subunit pairs with the beta subunit of gastric H(+)/K(+) ATPase ATP4B or the beta subunit of Na(+)/K(+) ATPases ATP1B1 and ATP1B3; this interaction is required for the formation of a functionally active pump and its targeting at the plasma membrane. In terms of tissue distribution, expressed in airway epithelial cells (at protein level). Found in skin and kidney. Detected in prostate basal cells (at protein level). Expression is increased in benign prostate hyperplasia and tumor tissues (at protein level).

It localises to the apical cell membrane. The catalysed reaction is K(+)(out) + ATP + H2O + H(+)(in) = K(+)(in) + ADP + phosphate + 2 H(+)(out). It catalyses the reaction K(+)(out) + Na(+)(in) + ATP + H2O = K(+)(in) + Na(+)(out) + ADP + phosphate + H(+). With respect to regulation, the ATPase activity is regulated by monovalent cations and pH. Up-regulated by K(+) ions in a dose-dependent way. Down-regulated by Na(+) ions. Inhibited by Na(+)/K(+)-ATPase inhibitor ouabain and H(+)/K(+)-ATPase inhibitor SCH-28080 with an intermediate sensitivity to completely resistant Na(+)/K(+)-ATPases and highly sensitive H(+)/K(+)-ATPases. Its function is as follows. The catalytic subunit of a H(+)/K(+) ATPase and/or Na(+)/K(+) ATPase pump which transports K(+) ions in exchange for Na(+) and/or H(+) ions across the apical membrane of epithelial cells. Uses ATP as an energy source to pump K(+) ions into the cell while transporting Na(+) and/or H(+) ions to the extracellular compartment. Involved in the maintenance of electrolyte homeostasis through K(+) ion absorption in kidney and colon. In the airway epithelium, may play a primary role in mucus acidification regulating its viscosity and clearance. The protein is Potassium-transporting ATPase alpha chain 2 of Homo sapiens (Human).